Consider the following 110-residue polypeptide: DNA-directed RNA polymerase subunit omega (110 aa).

Belongs to the RNA polymerase subunit omega family. As to quaternary structure, the RNAP catalytic core consists of 2 alpha, 1 beta, 1 beta' and 1 omega subunit. When a sigma factor is associated with the core the holoenzyme is formed, which can initiate transcription.

The catalysed reaction is RNA(n) + a ribonucleoside 5'-triphosphate = RNA(n+1) + diphosphate. Functionally, promotes RNA polymerase assembly. Latches the N- and C-terminal regions of the beta' subunit thereby facilitating its interaction with the beta and alpha subunits. The polypeptide is DNA-directed RNA polymerase subunit omega (Mycobacterium leprae (strain Br4923)).